The sequence spans 437 residues: GTPase Obg (437 aa).

The Obg domain occupies 2–160; sequence SMFLDTAKIS…RELQLELKIL (159 aa). Residues 161 to 338 form the OBG-type G domain; that stretch reads ADVGLVGFPS…LMDATAELLA (178 aa). GTP contacts are provided by residues 167–174, 192–196, 214–217, 284–287, and 319–321; these read GFPSVGKS, FTTIV, DLPG, NKMD, and SSL. Positions 174 and 194 each coordinate Mg(2+). The OCT domain occupies 359 to 437; the sequence is GFNEDERPFE…IGNFEFEFVD (79 aa).

This sequence belongs to the TRAFAC class OBG-HflX-like GTPase superfamily. OBG GTPase family. As to quaternary structure, monomer. Mg(2+) serves as cofactor.

The protein localises to the cytoplasm. In terms of biological role, an essential GTPase which binds GTP, GDP and possibly (p)ppGpp with moderate affinity, with high nucleotide exchange rates and a fairly low GTP hydrolysis rate. Plays a role in control of the cell cycle, stress response, ribosome biogenesis and in those bacteria that undergo differentiation, in morphogenesis control. This Streptococcus agalactiae serotype Ia (strain ATCC 27591 / A909 / CDC SS700) protein is GTPase Obg.